A 118-amino-acid chain; its full sequence is Holo-[acyl-carrier-protein] synthase (118 aa).

The Mg(2+) site is built by D9 and E52.

This sequence belongs to the P-Pant transferase superfamily. AcpS family. It depends on Mg(2+) as a cofactor.

It is found in the cytoplasm. The catalysed reaction is apo-[ACP] + CoA = holo-[ACP] + adenosine 3',5'-bisphosphate + H(+). In terms of biological role, transfers the 4'-phosphopantetheine moiety from coenzyme A to a Ser of acyl-carrier-protein. This chain is Holo-[acyl-carrier-protein] synthase, found in Frankia casuarinae (strain DSM 45818 / CECT 9043 / HFP020203 / CcI3).